A 151-amino-acid polypeptide reads, in one-letter code: Major curlin subunit (151 aa).

Residues 1–20 (MKLLKVAAIAAIVFSGSALA) form the signal peptide. The segment at 71-90 (TQHGGGNGADVGQGSDDSSI) is disordered.

It belongs to the CsgA/CsgB family.

The protein localises to the fimbrium. Curlin is the structural subunit of the curli fimbriae. Curli are coiled surface structures that assemble preferentially at growth temperatures below 37 degrees Celsius. Curli can bind to fibronectin. The polypeptide is Major curlin subunit (csgA) (Escherichia coli (strain K12)).